Consider the following 512-residue polypeptide: Plastidal glycolate/glycerate translocator 1, chloroplastic (512 aa).

A chloroplast-targeting transit peptide spans 1 to 76; the sequence is MATLLATPIF…MNFERKLSVQ (76 aa). Alanine 77 is modified (N-acetylalanine). 12 helical membrane passes run 93 to 113, 127 to 147, 160 to 180, 195 to 215, 238 to 258, 270 to 290, 293 to 313, 336 to 356, 367 to 387, 398 to 418, 425 to 445, and 480 to 500; these read VIAISHLLVSLGIILAADYFL, ALFGMFCIFSVLMIFDSVVPA, FLFIQRWLPLFYVPSLVVLPL, YIVAGGWLASLCVAGYTAIAV, LELWSWSGIFVVSFVGALFYP, PFLLSSTVLGYIVGSGLPSSI, VFHPIICCALSAVLAALAFGY, AGDILMGFLGSVILSFAFSMF, AEIFTSVIVSTVFSLYSTALV, TVSILPRCITVALALSIVSLF, LTAAVVVVTGLIGANFVQVVL, and LPFCAIAYALTGIFGSLLCSV.

It belongs to the CidB/LrgB family. In terms of tissue distribution, expressed in leaves, stems and flowers, but not in roots.

It localises to the plastid. The protein resides in the chloroplast membrane. In terms of biological role, glycolate/glycerate transporter required for photorespiration. This is Plastidal glycolate/glycerate translocator 1, chloroplastic (PLGG1) from Arabidopsis thaliana (Mouse-ear cress).